The primary structure comprises 25 residues: Small ribosomal subunit protein uS19 (25 aa).

The disordered stretch occupies residues 1 to 25 (GHKLGEFAPTRTFRGHKKEDKKVKR).

The protein belongs to the universal ribosomal protein uS19 family.

In terms of biological role, protein S19 forms a complex with S13 that binds strongly to the 16S ribosomal RNA. The sequence is that of Small ribosomal subunit protein uS19 (rpsS) from Acholeplasma laidlawii.